A 260-amino-acid polypeptide reads, in one-letter code: Indole-3-glycerol phosphate synthase (260 aa).

The protein belongs to the TrpC family.

The enzyme catalyses 1-(2-carboxyphenylamino)-1-deoxy-D-ribulose 5-phosphate + H(+) = (1S,2R)-1-C-(indol-3-yl)glycerol 3-phosphate + CO2 + H2O. Its pathway is amino-acid biosynthesis; L-tryptophan biosynthesis; L-tryptophan from chorismate: step 4/5. The chain is Indole-3-glycerol phosphate synthase from Nocardioides sp. (strain ATCC BAA-499 / JS614).